A 436-amino-acid polypeptide reads, in one-letter code: 3-ketoacyl-CoA thiolase (436 aa).

Cys99 acts as the Acyl-thioester intermediate in catalysis. Residues His392 and Cys422 each act as proton acceptor in the active site.

Belongs to the thiolase-like superfamily. Thiolase family. As to quaternary structure, heterotetramer of two alpha chains (FadJ) and two beta chains (FadI).

It is found in the cytoplasm. The catalysed reaction is an acyl-CoA + acetyl-CoA = a 3-oxoacyl-CoA + CoA. It participates in lipid metabolism; fatty acid beta-oxidation. Its function is as follows. Catalyzes the final step of fatty acid oxidation in which acetyl-CoA is released and the CoA ester of a fatty acid two carbons shorter is formed. This Salmonella dublin (strain CT_02021853) protein is 3-ketoacyl-CoA thiolase.